Here is a 385-residue protein sequence, read N- to C-terminus: tRNA(Met) cytidine acetate ligase (385 aa).

Residues 7–20 (VAEY…HEFL), Gly-101, Asn-153, and Arg-178 each bind ATP.

The protein belongs to the TmcAL family.

The protein localises to the cytoplasm. It carries out the reaction cytidine(34) in elongator tRNA(Met) + acetate + ATP = N(4)-acetylcytidine(34) in elongator tRNA(Met) + AMP + diphosphate. Its function is as follows. Catalyzes the formation of N(4)-acetylcytidine (ac(4)C) at the wobble position of elongator tRNA(Met), using acetate and ATP as substrates. First activates an acetate ion to form acetyladenylate (Ac-AMP) and then transfers the acetyl group to tRNA to form ac(4)C34. In Lactobacillus gasseri (strain ATCC 33323 / DSM 20243 / BCRC 14619 / CIP 102991 / JCM 1131 / KCTC 3163 / NCIMB 11718 / NCTC 13722 / AM63), this protein is tRNA(Met) cytidine acetate ligase.